The chain runs to 627 residues: Coiled-coil domain-containing protein 22 (627 aa).

The interval 1-321 (MEEADRILIH…VSDVPATSRR (321 aa)) is sufficient for interaction with COMMD1. Residues 1 to 447 (MEEADRILIH…LQDCRELESS (447 aa)) are sufficicient and required for interaction with CCDC93. The disordered stretch occupies residues 218-243 (TGRDRPGDEDWVHRTSRLPPQEDTRA). Residues 219 to 230 (GRDRPGDEDWVH) are compositionally biased toward basic and acidic residues. The stretch at 320–627 (RRPEQVTWAA…AGLLGRVREA (308 aa)) forms a coiled coil. Ser410 carries the post-translational modification Phosphoserine.

The protein belongs to the CCDC22 family. Component of the commander complex consisting of the CCC subcomplex and the retriever subcomplex. Component of the CCC (COMMD/CCDC22/CCDC93) subcomplex consisting of COMMD1, COMMD2, COMMD3, COMMD4, COMMD5, COMMD6, COMMD7, COMMD8, COMMD9, COMMD10, CCDC22 and CCDC93. Forms a coiled-coil heterodimer with CCDC22; this heterodimer interacts with the guanine nucleotide exchange factor DENND10; the interaction is direct. Interacts with CUL1, CUL2, CUL3, SKP1, BTRC. Interacts with SNX17 and SNX31. Interacts with CPNE1 and CPNE4. As to expression, widely expressed in adult tissues and in fetal liver and brain, with highest levels in prostate and lowest in skeletal muscle.

The protein localises to the endosome. It localises to the cytoplasm. It is found in the cytoskeleton. The protein resides in the microtubule organizing center. Its subcellular location is the centrosome. Functionally, component of the commander complex that is essential for endosomal recycling of transmembrane cargos; the Commander complex is composed of composed of the CCC subcomplex and the retriever subcomplex. Component of the CCC complex, which is involved in the regulation of endosomal recycling of surface proteins, including integrins, signaling receptor and channels. Involved in regulation of NF-kappa-B signaling. Promotes ubiquitination of I-kappa-B-kinase subunit IKBKB and its subsequent proteasomal degradation leading to NF-kappa-B activation; the function may involve association with COMMD8 and a CUL1-dependent E3 ubiquitin ligase complex. May down-regulate NF-kappa-B activity via association with COMMD1 and involving a CUL2-dependent E3 ubiquitin ligase complex. Regulates the cellular localization of COMM domain-containing proteins, such as COMMD1 and COMMD10. Component of the CCC complex, which is involved in the regulation of endosomal recycling of surface proteins, including integrins, signaling receptor and channels. The CCC complex associates with SNX17, retriever and WASH complexes to prevent lysosomal degradation and promote cell surface recycling of numerous cargos such as integrins ITGA5:ITGB1. Plays a role in copper ion homeostasis. Involved in copper-dependent ATP7A trafficking between the trans-Golgi network and vesicles in the cell periphery; the function is proposed to depend on its association within the CCC complex and cooperation with the WASH complex on early endosomes. Its function is as follows. (Microbial infection) The CCC complex, in collaboration with the heterotrimeric retriever complex, mediates the exit of human papillomavirus to the cell surface. In Homo sapiens (Human), this protein is Coiled-coil domain-containing protein 22 (CCDC22).